Consider the following 485-residue polypeptide: Cytolytic protein enterolobin (485 aa).

2 cysteine pairs are disulfide-bonded: Cys34-Cys98 and Cys183-Cys189.

This sequence belongs to the aerolysin family. In terms of assembly, oligomerizes as a hexamer. In terms of processing, the N-terminus is blocked.

Functionally, cytolytic protein with insecticidal activity. Acts as a pro-inflammatory agent. The sequence is that of Cytolytic protein enterolobin from Enterolobium contortisiliquum (Pacara earpod tree).